The primary structure comprises 137 residues: Succinate dehydrogenase cytochrome b560 subunit (137 aa).

2 helical membrane passes run 31-51 (AFLATMVLFSILFFKIGDLSL) and 60-80 (FFFLTFYLNWFIISLVNFTLL). Residue His85 coordinates heme. Residues 106 to 126 (VYTSGIIMLFCAAFLALLNII) traverse the membrane as a helical segment.

The protein belongs to the cytochrome b560 family. In terms of assembly, forms part of complex II containing four subunits: a 70 kDa flavoprotein (FP), a 27 kDa iron-sulfur protein (IP), a cytochrome B and a membrane-anchoring protein. Heme serves as cofactor.

It is found in the mitochondrion inner membrane. Its pathway is carbohydrate metabolism; tricarboxylic acid cycle. Functionally, membrane-anchoring subunit of succinate dehydrogenase (SDH) that is involved in complex II of the mitochondrial electron transport chain and is responsible for transferring electrons from succinate to ubiquinone (coenzyme Q). This Marchantia polymorpha (Common liverwort) protein is Succinate dehydrogenase cytochrome b560 subunit (SDH3).